The primary structure comprises 92 residues: Elongation factor 1-beta (92 aa).

Belongs to the EF-1-beta/EF-1-delta family.

Its function is as follows. Promotes the exchange of GDP for GTP in EF-1-alpha/GDP, thus allowing the regeneration of EF-1-alpha/GTP that could then be used to form the ternary complex EF-1-alpha/GTP/AAtRNA. The chain is Elongation factor 1-beta from Pyrobaculum calidifontis (strain DSM 21063 / JCM 11548 / VA1).